The primary structure comprises 70 residues: NADH dehydrogenase [ubiquinone] 1 alpha subcomplex subunit 1 (70 aa).

Residues 1–21 form a helical membrane-spanning segment; the sequence is MWFEILPGLAIMGVCLVIPGV.

Belongs to the complex I NDUFA1 subunit family. Complex I is composed of 45 different subunits.

The protein resides in the mitochondrion inner membrane. Its function is as follows. Accessory subunit of the mitochondrial membrane respiratory chain NADH dehydrogenase (Complex I), that is believed not to be involved in catalysis. Complex I functions in the transfer of electrons from NADH to the respiratory chain. The immediate electron acceptor for the enzyme is believed to be ubiquinone. This chain is NADH dehydrogenase [ubiquinone] 1 alpha subcomplex subunit 1 (Ndufa1), found in Mus musculus (Mouse).